We begin with the raw amino-acid sequence, 877 residues long: Alanine--tRNA ligase (877 aa).

Zn(2+)-binding residues include histidine 567, histidine 571, cysteine 669, and histidine 673.

Belongs to the class-II aminoacyl-tRNA synthetase family. It depends on Zn(2+) as a cofactor.

The protein resides in the cytoplasm. It catalyses the reaction tRNA(Ala) + L-alanine + ATP = L-alanyl-tRNA(Ala) + AMP + diphosphate. Functionally, catalyzes the attachment of alanine to tRNA(Ala) in a two-step reaction: alanine is first activated by ATP to form Ala-AMP and then transferred to the acceptor end of tRNA(Ala). Also edits incorrectly charged Ser-tRNA(Ala) and Gly-tRNA(Ala) via its editing domain. The polypeptide is Alanine--tRNA ligase (Rickettsia prowazekii (strain Madrid E)).